Consider the following 384-residue polypeptide: Lipid-A-disaccharide synthase 1 (384 aa).

Belongs to the LpxB family.

It catalyses the reaction a lipid X + a UDP-2-N,3-O-bis[(3R)-3-hydroxyacyl]-alpha-D-glucosamine = a lipid A disaccharide + UDP + H(+). Its pathway is bacterial outer membrane biogenesis; LPS lipid A biosynthesis. Condensation of UDP-2,3-diacylglucosamine and 2,3-diacylglucosamine-1-phosphate to form lipid A disaccharide, a precursor of lipid A, a phosphorylated glycolipid that anchors the lipopolysaccharide to the outer membrane of the cell. The polypeptide is Lipid-A-disaccharide synthase 1 (Legionella pneumophila subsp. pneumophila (strain Philadelphia 1 / ATCC 33152 / DSM 7513)).